The following is a 138-amino-acid chain: Acidic phospholipase A2 daboiatoxin A chain (138 aa).

A signal peptide spans 1-16; the sequence is MRTLWIMAVCLIGVEG. Intrachain disulfides connect Cys-42–Cys-131, Cys-44–Cys-60, Cys-59–Cys-111, Cys-65–Cys-138, Cys-66–Cys-104, Cys-73–Cys-97, and Cys-91–Cys-102. Ca(2+)-binding residues include Tyr-43, Gly-45, and Gly-47. His-63 is an active-site residue. Asp-64 lines the Ca(2+) pocket. Asp-105 is a catalytic residue.

This sequence belongs to the phospholipase A2 family. Group II subfamily. D49 sub-subfamily. Heterodimer of A and B chain; non-covalently linked. The acidic protein (B chain) has phospholipase A2 activity and the A chain weakly inhibits the B chain enzymatic activity but potentiates its lethal potency. It depends on Ca(2+) as a cofactor. As to expression, expressed by the venom gland.

The protein resides in the secreted. The catalysed reaction is a 1,2-diacyl-sn-glycero-3-phosphocholine + H2O = a 1-acyl-sn-glycero-3-phosphocholine + a fatty acid + H(+). In terms of biological role, heterodimer (A and B chains): phospholipase A2 that acts as a presynaptic neurotoxin and shows a PLA2 activity of 1377 umol/min/mg. In vivo, induces edema and produces neurotoxic symptoms in mice. Also exhibits indirect hemolysis, a strong myonecrotic activity and cytotoxicity. PLA2 catalyzes the calcium-dependent hydrolysis of the 2-acyl groups in 3-sn-phosphoglycerides. Functionally, monomer: Snake venom phospholipase A2 (PLA2) that shows a PLA2 activity of 578 umol/min/mg. The protein is Acidic phospholipase A2 daboiatoxin A chain of Daboia siamensis (Eastern Russel's viper).